The chain runs to 603 residues: Myotubularin (603 aa).

Ser-13 and Ser-18 each carry phosphoserine. The 69-residue stretch at 29–97 folds into the GRAM domain; sequence QDVSETVPRL…GVISRIEKMG (69 aa). The 376-residue stretch at 163–538 folds into the Myotubularin phosphatase domain; the sequence is GWTVYNPVEE…RHLELWVNYY (376 aa). Residues Asn-288, Asn-313, and Ile-314 each contribute to the a 1,2-diacyl-sn-glycero-3-phospho-(1D-myo-inositol-3,5-bisphosphate) site. A 1,2-diacyl-sn-glycero-3-phospho-(1D-myo-inositol-3-phosphate) is bound by residues Asn-288, Asn-313, and Ile-314. Cys-375 functions as the Phosphocysteine intermediate in the catalytic mechanism. Ser-376, Asp-377, Gly-378, Trp-379, Asp-380, Arg-381, Lys-417, and Arg-421 together coordinate a 1,2-diacyl-sn-glycero-3-phospho-(1D-myo-inositol-3,5-bisphosphate). Residues Ser-376, Asp-377, Gly-378, Trp-379, Asp-380, and Arg-381 each contribute to the a 1,2-diacyl-sn-glycero-3-phospho-(1D-myo-inositol-3-phosphate) site. Residue Arg-421 participates in a 1,2-diacyl-sn-glycero-3-phospho-(1D-myo-inositol-3-phosphate) binding. Residue Thr-495 is modified to Phosphothreonine. Ser-588 carries the post-translational modification Phosphoserine.

It belongs to the protein-tyrosine phosphatase family. Non-receptor class myotubularin subfamily. Heterodimer with MTMR12. Interacts with KMT2A/MLL1 (via SET domain). Interacts with DES in skeletal muscle but not in cardiac muscle. Interacts with SPEG. Widely expressed with highest levels detected in heart and muscle and low levels in brain (at protein level). Expressed in skeletal muscles (at protein level).

It is found in the cytoplasm. Its subcellular location is the cell membrane. The protein localises to the cell projection. It localises to the filopodium. The protein resides in the ruffle. It is found in the late endosome. Its subcellular location is the myofibril. The protein localises to the sarcomere. The catalysed reaction is a 1,2-diacyl-sn-glycero-3-phospho-(1D-myo-inositol-3-phosphate) + H2O = a 1,2-diacyl-sn-glycero-3-phospho-(1D-myo-inositol) + phosphate. It carries out the reaction a 1,2-diacyl-sn-glycero-3-phospho-(1D-myo-inositol-3,5-bisphosphate) + H2O = a 1,2-diacyl-sn-glycero-3-phospho-(1D-myo-inositol-5-phosphate) + phosphate. It catalyses the reaction 1,2-dioctanoyl-sn-glycero-3-phospho-(1-D-myo-inositol-3-phosphate) + H2O = 1,2-dioctanoyl-sn-glycero-3-phospho-(1D-myo-inositol) + phosphate. The enzyme catalyses 1,2-dioctanoyl-sn-glycero-3-phospho-(1D-myo-inositol-3,5-bisphosphate) + H2O = 1,2-dioctanoyl-sn-glycero-3-phospho-(1D-myo-inositol-5-phosphate) + phosphate. The catalysed reaction is 1,2-dihexadecanoyl-sn-glycero-3-phospho-(1D-myo-inositol-3,5-phosphate) + H2O = 1,2-dihexadecanoyl-sn-glycero-3-phospho-(1D-myo-inositol-5-phosphate) + phosphate. Allosterically activated by phosphatidylinositol 5-phosphate (PI5P). Its function is as follows. Lipid phosphatase which dephosphorylates phosphatidylinositol 3-monophosphate (PI3P) and phosphatidylinositol 3,5-bisphosphate (PI(3,5)P2). Has also been shown to dephosphorylate phosphotyrosine- and phosphoserine-containing peptides. Negatively regulates EGFR degradation through regulation of EGFR trafficking from the late endosome to the lysosome. Plays a role in vacuolar formation and morphology. Regulates desmin intermediate filament assembly and architecture. Plays a role in mitochondrial morphology and positioning. Required for skeletal muscle maintenance but not for myogenesis. In skeletal muscles, stabilizes MTMR12 protein levels. The sequence is that of Myotubularin from Mus musculus (Mouse).